A 375-amino-acid chain; its full sequence is tRNA-specific 2-thiouridylase MnmA (375 aa).

ATP-binding positions include 12 to 19 and Met-38; that span reads GMSGGVDS. The tract at residues 98–100 is interaction with target base in tRNA; that stretch reads NPD. The active-site Nucleophile is Cys-103. A disulfide bridge links Cys-103 with Cys-200. Residue Gly-127 participates in ATP binding. Residues 150–152 form an interaction with tRNA region; sequence KDQ. Cys-200 acts as the Cysteine persulfide intermediate in catalysis. The interval 312-313 is interaction with tRNA; the sequence is RY.

The protein belongs to the MnmA/TRMU family.

Its subcellular location is the cytoplasm. It carries out the reaction S-sulfanyl-L-cysteinyl-[protein] + uridine(34) in tRNA + AH2 + ATP = 2-thiouridine(34) in tRNA + L-cysteinyl-[protein] + A + AMP + diphosphate + H(+). Its function is as follows. Catalyzes the 2-thiolation of uridine at the wobble position (U34) of tRNA, leading to the formation of s(2)U34. This Lactobacillus helveticus (strain DPC 4571) protein is tRNA-specific 2-thiouridylase MnmA.